We begin with the raw amino-acid sequence, 186 residues long: Peptidyl-tRNA hydrolase (186 aa).

Tyrosine 14 is a tRNA binding site. The active-site Proton acceptor is histidine 19. TRNA contacts are provided by tyrosine 64, asparagine 66, and asparagine 112.

The protein belongs to the PTH family. Monomer.

Its subcellular location is the cytoplasm. The catalysed reaction is an N-acyl-L-alpha-aminoacyl-tRNA + H2O = an N-acyl-L-amino acid + a tRNA + H(+). Hydrolyzes ribosome-free peptidyl-tRNAs (with 1 or more amino acids incorporated), which drop off the ribosome during protein synthesis, or as a result of ribosome stalling. Its function is as follows. Catalyzes the release of premature peptidyl moieties from peptidyl-tRNA molecules trapped in stalled 50S ribosomal subunits, and thus maintains levels of free tRNAs and 50S ribosomes. This chain is Peptidyl-tRNA hydrolase, found in Mesoplasma florum (strain ATCC 33453 / NBRC 100688 / NCTC 11704 / L1) (Acholeplasma florum).